The following is a 973-amino-acid chain: Putative cell agglutination protein pfl3 (973 aa).

Residues 1 to 24 (MSLFPQILLRLLFLAFTLKSTSNA) form the signal peptide. Asn75, Asn96, Asn147, Asn171, Asn184, Asn218, and Asn253 each carry an N-linked (GlcNAc...) asparagine glycan. 18 tandem repeats follow at residues 198–232 (GTIT…IPTA), 233–267 (GTVT…IPTA), 268–302 (GTRT…LPTA), 303–337 (GTNT…YPTA), 338–372 (GMVT…IPTA), 373–407 (GTVT…IPTA), 408–442 (GTRT…LPTA), 443–477 (GTNT…EPTA), 478–512 (GVVT…EPTA), 513–547 (GVVT…EPTA), 548–582 (GVVT…EPTA), 583–617 (GVVT…EPTA), 618–652 (GVVT…EPTA), 653–687 (GVVT…EPTA), 688–722 (GVVT…EPTA), 723–757 (GVVT…EPTA), 758–792 (GVVT…EPTA), and 793–828 (GYVT…VPSL). The 18 X 35 AA approximate tandem repeats stretch occupies residues 198-828 (GTITLTTISG…GTVLQVVPSL (631 aa)). Asn352 and Asn393 each carry an N-linked (GlcNAc...) asparagine glycan. A DIPSY domain is found at 820 to 973 (TVLQVVPSLF…SNVYFKAVPL (154 aa)). Asn848 carries an N-linked (GlcNAc...) asparagine glycan.

It belongs to the mam3/map4 family.

It localises to the cell surface. Functionally, may be involved in agglutination during conjugation or other aspects of colony formation. Induces flocculation when overexpressed. The sequence is that of Putative cell agglutination protein pfl3 from Schizosaccharomyces pombe (strain 972 / ATCC 24843) (Fission yeast).